A 473-amino-acid polypeptide reads, in one-letter code: Glutamate--tRNA ligase (473 aa).

A 'HIGH' region motif is present at residues 11–21 (PSPTGFLHIGG). A 'KMSKS' region motif is present at residues 240–244 (KLSKR). ATP is bound at residue K243.

This sequence belongs to the class-I aminoacyl-tRNA synthetase family. Glutamate--tRNA ligase type 1 subfamily. Monomer.

The protein resides in the cytoplasm. The enzyme catalyses tRNA(Glu) + L-glutamate + ATP = L-glutamyl-tRNA(Glu) + AMP + diphosphate. Its function is as follows. Catalyzes the attachment of glutamate to tRNA(Glu) in a two-step reaction: glutamate is first activated by ATP to form Glu-AMP and then transferred to the acceptor end of tRNA(Glu). The chain is Glutamate--tRNA ligase from Afipia carboxidovorans (strain ATCC 49405 / DSM 1227 / KCTC 32145 / OM5) (Oligotropha carboxidovorans).